The following is a 602-amino-acid chain: Elongation factor 4 (602 aa).

In terms of domain architecture, tr-type G spans 7–189 (SKIRNFCIIA…AIVRRVPPPQ (183 aa)). Residues 19-24 (DHGKST) and 136-139 (NKVD) each bind GTP.

Belongs to the TRAFAC class translation factor GTPase superfamily. Classic translation factor GTPase family. LepA subfamily.

It is found in the cell inner membrane. The enzyme catalyses GTP + H2O = GDP + phosphate + H(+). In terms of biological role, required for accurate and efficient protein synthesis under certain stress conditions. May act as a fidelity factor of the translation reaction, by catalyzing a one-codon backward translocation of tRNAs on improperly translocated ribosomes. Back-translocation proceeds from a post-translocation (POST) complex to a pre-translocation (PRE) complex, thus giving elongation factor G a second chance to translocate the tRNAs correctly. Binds to ribosomes in a GTP-dependent manner. This chain is Elongation factor 4, found in Prochlorococcus marinus (strain MIT 9215).